Reading from the N-terminus, the 335-residue chain is Tetraacyldisaccharide 4'-kinase (335 aa).

58–65 lines the ATP pocket; the sequence is TVGGSGKT.

Belongs to the LpxK family.

It carries out the reaction a lipid A disaccharide + ATP = a lipid IVA + ADP + H(+). Its pathway is glycolipid biosynthesis; lipid IV(A) biosynthesis; lipid IV(A) from (3R)-3-hydroxytetradecanoyl-[acyl-carrier-protein] and UDP-N-acetyl-alpha-D-glucosamine: step 6/6. Transfers the gamma-phosphate of ATP to the 4'-position of a tetraacyldisaccharide 1-phosphate intermediate (termed DS-1-P) to form tetraacyldisaccharide 1,4'-bis-phosphate (lipid IVA). This chain is Tetraacyldisaccharide 4'-kinase, found in Shewanella sp. (strain ANA-3).